Consider the following 353-residue polypeptide: Phospho-furanose lactonase (353 aa).

Residues His-24, His-26, Lys-153, His-186, and His-214 each coordinate Zn(2+). Lys-153 carries the N6-carboxylysine modification. 244 to 245 (KY) contacts substrate. Asp-272 is a binding site for Zn(2+). 275-278 (RILY) serves as a coordination point for substrate.

The protein belongs to the metallo-dependent hydrolases superfamily. Phosphotriesterase family. It depends on Zn(2+) as a cofactor.

The enzyme catalyses a 1,4-lactone + H2O = a 4-hydroxyacid + H(+). It catalyses the reaction D-xylono-1,4-lactone 5-phosphate + H2O = 5-phospho-D-xylonate + H(+). The catalysed reaction is L-arabino-1,4-lactone 5-phosphate + H2O = 5-phospho-L-arabinonate + H(+). Functionally, catalyzes the hydrolysis of D-xylono-1,4-lactone-5-phosphate and L-arabino-1,4-lactone-5-phosphate. Also able to hydrolyze carboxy 1,4-lactones. The polypeptide is Phospho-furanose lactonase (Mycoplasmopsis synoviae (strain 53) (Mycoplasma synoviae)).